The following is a 772-amino-acid chain: NAD(P)H-quinone oxidoreductase subunit 5, chloroplastic (772 aa).

16 helical membrane passes run tryptophan 9–phenylalanine 29, tryptophan 40–isoleucine 60, isoleucine 89–phenylalanine 109, phenylalanine 125–isoleucine 145, isoleucine 147–threonine 167, glycine 185–phenylalanine 205, asparagine 220–alanine 240, threonine 259–alanine 279, tyrosine 290–alanine 312, leucine 328–isoleucine 348, alanine 355–serine 375, threonine 397–serine 417, tryptophan 426–tyrosine 446, leucine 550–phenylalanine 570, phenylalanine 604–phenylalanine 624, and isoleucine 731–leucine 751.

It belongs to the complex I subunit 5 family. As to quaternary structure, NDH is composed of at least 16 different subunits, 5 of which are encoded in the nucleus.

The protein resides in the plastid. Its subcellular location is the chloroplast thylakoid membrane. It carries out the reaction a plastoquinone + NADH + (n+1) H(+)(in) = a plastoquinol + NAD(+) + n H(+)(out). The catalysed reaction is a plastoquinone + NADPH + (n+1) H(+)(in) = a plastoquinol + NADP(+) + n H(+)(out). Functionally, NDH shuttles electrons from NAD(P)H:plastoquinone, via FMN and iron-sulfur (Fe-S) centers, to quinones in the photosynthetic chain and possibly in a chloroplast respiratory chain. The immediate electron acceptor for the enzyme in this species is believed to be plastoquinone. Couples the redox reaction to proton translocation, and thus conserves the redox energy in a proton gradient. The protein is NAD(P)H-quinone oxidoreductase subunit 5, chloroplastic (ndhF) of Oenothera argillicola (Appalachian evening primrose).